The following is a 224-amino-acid chain: MYHIPDVLSTDQVAEFTRQLAQAEWVDGRVTVGSQGAAVKQNQQIDTRTPLYARLQAAVLDMLRGHPQFFSAALPRTISAPLFNRYGPGETYGFHVDGAVRQNGEAGWMRTDLSATLFLCDPESYEGGELVIEDTYGQHRVKLPAGHLVLYPASSLHCVTPVTRGVRQASFLWIQSMVRDDKQRAMLYDLDRTIQSLKARFGDGEEVLSLLNMYHNLLRQWTEV.

Residues 77–176 (TISAPLFNRY…RQASFLWIQS (100 aa)) enclose the Fe2OG dioxygenase domain. Histidine 95, aspartate 97, and histidine 157 together coordinate Fe cation. Arginine 167 is a 2-oxoglutarate binding site.

Fe(2+) is required as a cofactor. L-ascorbate serves as cofactor.

The protein is PKHD-type hydroxylase KPN78578_12210 of Klebsiella pneumoniae subsp. pneumoniae (strain ATCC 700721 / MGH 78578).